The following is a 601-amino-acid chain: Zinc finger CCCH domain-containing protein 33 (601 aa).

2 ANK repeats span residues 71-101 (ERRT…EAAR) and 106-138 (DGAT…SVDA). The span at 167–180 (PAVSPSSSPKKSAS) shows a compositional bias: low complexity. The interval 167 to 203 (PAVSPSSSPKKSASPPSPPPPQEAKKEYPPDLTLPDL) is disordered. 2 C3H1-type zinc fingers span residues 252–280 (SYSC…HGVF) and 288–312 (QYRT…HKPD).

The sequence is that of Zinc finger CCCH domain-containing protein 33 from Oryza sativa subsp. japonica (Rice).